Consider the following 284-residue polypeptide: Pantothenate synthetase (284 aa).

30-37 (MGNLHEGH) provides a ligand contact to ATP. His-37 (proton donor) is an active-site residue. A (R)-pantoate-binding site is contributed by Gln-61. A beta-alanine-binding site is contributed by Gln-61. 149 to 152 (GEKD) lines the ATP pocket. Gln-155 contacts (R)-pantoate. ATP contacts are provided by residues Val-178 and 186-189 (LSSR).

The protein belongs to the pantothenate synthetase family. In terms of assembly, homodimer.

It is found in the cytoplasm. It carries out the reaction (R)-pantoate + beta-alanine + ATP = (R)-pantothenate + AMP + diphosphate + H(+). The protein operates within cofactor biosynthesis; (R)-pantothenate biosynthesis; (R)-pantothenate from (R)-pantoate and beta-alanine: step 1/1. Catalyzes the condensation of pantoate with beta-alanine in an ATP-dependent reaction via a pantoyl-adenylate intermediate. This Yersinia enterocolitica serotype O:8 / biotype 1B (strain NCTC 13174 / 8081) protein is Pantothenate synthetase.